Reading from the N-terminus, the 636-residue chain is Multicopper oxidase CTB12 (636 aa).

The N-terminal stretch at 1-23 is a signal peptide; sequence MWSVRLYPLALTLLFQCVSPAAA. Residues 62–168 enclose the Plastocyanin-like 1 domain; that stretch reads AGIGFREAIF…LYGAVVIAPD (107 aa). Positions 104 and 106 each coordinate Cu cation. N-linked (GlcNAc...) asparagine glycosylation occurs at Asn-136. Cu cation contacts are provided by His-148 and His-150. An N-linked (GlcNAc...) asparagine glycan is attached at Asn-304. The Plastocyanin-like 2 domain occupies 318 to 381; that stretch reads LTFVNPGGLY…QEKARHVVRV (64 aa). Asn-472 carries N-linked (GlcNAc...) asparagine glycosylation. Residues 486 to 613 form the Plastocyanin-like 3 domain; that stretch reads NVEDVPATEL…GGMGMVVLDG (128 aa). The Cu cation site is built by His-519, His-522, and His-524. Asn-576 is a glycosylation site (N-linked (GlcNAc...) asparagine). The Cu cation site is built by His-595, Cys-596, His-597, and His-601.

It belongs to the multicopper oxidase family.

The protein operates within mycotoxin biosynthesis. In terms of biological role, multicopper oxidase; part of the gene cluster that mediates the biosynthesis of cercosporin, a light-activated, non-host-selective toxin. The perylenequinone chromophore of cercosporin absorbs light energy to attain an electronically-activated triplet state and produces active oxygen species such as the hydroxyl radical, superoxide, hydrogen peroxide or singlet oxygen upon reaction with oxygen molecules. These reactive oxygen species cause damage to various cellular components including lipids, proteins and nucleic acids. The first step of cercosporin biosynthesis is performed by the polyketide synthase CTB1 which catalyzes the formation of nor-toralactone. The starter unit acyltransferase (SAT) domain of CTB1 initiates polyketide extension by the selective utilization of acetyl-CoA, which is elongated to the heptaketide in the beta-ketoacyl synthase (KS) domain by successive condensations with six malonyl units introduced by the malonyl acyltransferase (MAT) domain. The product template (PT) domain catalyzes C4-C9 and C2-C11 aldol cyclizations and dehydrations to a trihydroxynaphthalene, which is thought to be delivered to the thioesterase (TE) domain for product release. The bifunctional enzyme CTB3 then methylates nor-toralactone to toralactone before conducting an unusual oxidative aromatic ring opening. The O-methyltransferase CTB2 further methylates the nascent OH-6 of the CBT3 product, blocking further oxidation at this site before the reductase CTB6 reduces the 2-oxopropyl ketone at position C7, giving naphthalene. The FAD-dependent monooxygenase CTB5 in concert with the multicopper oxidase CTB12 are responsible for homodimerization of naphthalene with CTB7 installing the dioxepine moiety, finally producing cercosporin. The fasciclin domain-containing protein CTB11 might act with CTB5 and CTB12 whereas the roles of CTB9 and CTB10 have still to be elucidated. The chain is Multicopper oxidase CTB12 from Cercospora beticola (Sugarbeet leaf spot fungus).